Here is an 865-residue protein sequence, read N- to C-terminus: NBPF family member NBPF11 (865 aa).

Positions 70 to 130 (MLRNERQFKE…RSLNEHLQAL (61 aa)) form a coiled coil. The interval 161–200 (KLSPENDEDEDEDVQVEEDEKVLESSAPREVQKAEESKVP) is disordered. The span at 165–181 (ENDEDEDEDVQVEEDEK) shows a compositional bias: acidic residues. Positions 165-259 (ENDEDEDEDV…GCQDALNILP (95 aa)) constitute an Olduvai 1 domain. Positions 190-200 (EVQKAEESKVP) are enriched in basic and acidic residues. Residues 339–401 (KSMLRNERQF…RSLNEHLQAL (63 aa)) are a coiled coil. Olduvai domains are found at residues 436–528 (ENDN…HIIP), 529–617 (ENES…ATGP), 620–675 (SREL…VDMD), 676–767 (EIEK…PPCP), and 770–865 (SREL…SAAC). Disordered regions lie at residues 450–475 (AEKV…EDSL) and 520–567 (WEDA…GYST). Acidic residues-rich tracts occupy residues 530–539 (NESDDEEEEE) and 550–562 (ESEE…ESWD). Positions 829–865 (RGRGRKEGEEDQRRKEEGEEKKGKKIKTHHAPGSAAC) are disordered. The segment covering 833 to 850 (RKEGEEDQRRKEEGEEKK) has biased composition (basic and acidic residues).

The protein belongs to the NBPF family. In terms of tissue distribution, expressed in spinal cord.

It localises to the cytoplasm. In Homo sapiens (Human), this protein is NBPF family member NBPF11.